The sequence spans 206 residues: uncharacterized protein (206 aa).

The segment at arginine 147–arginine 206 is disordered. Over residues arginine 159–glycine 173 the composition is skewed to basic and acidic residues. Positions glutamine 187–arginine 206 are enriched in basic residues.

This is an uncharacterized protein from Schizosaccharomyces pombe (strain 972 / ATCC 24843) (Fission yeast).